We begin with the raw amino-acid sequence, 386 residues long: Zinc finger CCCH domain-containing protein 39 (386 aa).

The disordered stretch occupies residues 1–90; sequence MDSSYSDSRP…SSSNPWMVPS (90 aa). The span at 20 to 37 shows a compositional bias: polar residues; the sequence is WNQTQMIDSMANPMNNEQ. A compositionally biased stretch (low complexity) spans 43–58; the sequence is LSESQSQSQPSQQLQP. Residues 72-85 show a composition bias toward polar residues; sequence NPASSFPQPSSSNP. The segment at 104-131 adopts a C3H1-type 1 zinc-finger fold; sequence FYKTRMCAKFRAGTCRNGELCNFAHGIE. Positions 136–166 are disordered; sequence PPSNWQEIVGPPPAGQDRERERERERERERP. The segment covering 151–166 has biased composition (basic and acidic residues); sequence QDRERERERERERERP. C3H1-type zinc fingers lie at residues 183-211 and 269-297; these read ILRM…HEDL and YWKT…HGQA.

In Arabidopsis thaliana (Mouse-ear cress), this protein is Zinc finger CCCH domain-containing protein 39.